Consider the following 615-residue polypeptide: DNA mismatch repair protein MutL (615 aa).

This sequence belongs to the DNA mismatch repair MutL/HexB family.

In terms of biological role, this protein is involved in the repair of mismatches in DNA. It is required for dam-dependent methyl-directed DNA mismatch repair. May act as a 'molecular matchmaker', a protein that promotes the formation of a stable complex between two or more DNA-binding proteins in an ATP-dependent manner without itself being part of a final effector complex. The protein is DNA mismatch repair protein MutL of Histophilus somni (strain 2336) (Haemophilus somnus).